Consider the following 514-residue polypeptide: 2,3-bisphosphoglycerate-independent phosphoglycerate mutase (514 aa).

Asp14 and Ser64 together coordinate Mn(2+). Catalysis depends on Ser64, which acts as the Phosphoserine intermediate. Residues His125, 155 to 156 (RD), Arg187, Arg193, 263 to 266 (RADR), and Lys336 each bind substrate. Residues Asp403, His407, Asp444, His445, and His463 each contribute to the Mn(2+) site.

It belongs to the BPG-independent phosphoglycerate mutase family. In terms of assembly, monomer. Requires Mn(2+) as cofactor.

It catalyses the reaction (2R)-2-phosphoglycerate = (2R)-3-phosphoglycerate. The protein operates within carbohydrate degradation; glycolysis; pyruvate from D-glyceraldehyde 3-phosphate: step 3/5. In terms of biological role, catalyzes the interconversion of 2-phosphoglycerate and 3-phosphoglycerate. The sequence is that of 2,3-bisphosphoglycerate-independent phosphoglycerate mutase from Shewanella halifaxensis (strain HAW-EB4).